A 173-amino-acid chain; its full sequence is Alpha-crystallin A chain (173 aa).

Residue M1 is modified to N-acetylmethionine. The required for complex formation with BFSP1 and BFSP2 stretch occupies residues 1 to 63 (MDIAIQHPWF…RTVLDSGISE (63 aa)). Q6 is subject to Deamidated glutamine; partial. At S45 the chain carries Phosphoserine. The residue at position 50 (Q50) is a Deamidated glutamine; partial. Positions 52–162 (LFRTVLDSGI…GHSERAIPVS (111 aa)) constitute a sHSP domain. The residue at position 70 (K70) is an N6-acetyllysine. At Q90 the chain carries Deamidated glutamine; partial. At K99 the chain carries N6-acetyllysine. H100 serves as a coordination point for Zn(2+). The residue at position 101 (N101) is a Deamidated asparagine; partial. The Zn(2+) site is built by E102 and H107. S122 is modified (phosphoserine). Deamidated asparagine; partial is present on N123. Residues 144–173 (PKIPSGVDAGHSERAIPVSREEKPSSAPSS) form a disordered region. A compositionally biased stretch (basic and acidic residues) spans 153-167 (GHSERAIPVSREEKP). Residue H154 coordinates Zn(2+). A glycan (O-linked (GlcNAc) serine) is linked at S162.

Belongs to the small heat shock protein (HSP20) family. In terms of assembly, heteromer composed of three CRYAA and one CRYAB subunits. Inter-subunit bridging via zinc ions enhances stability, which is crucial as there is no protein turn over in the lens. Can also form homodimers and homotetramers (dimers of dimers) which serve as the building blocks of homooligomers. Within homooligomers, the zinc-binding motif is created from residues of 3 different molecules. His-100 and Glu-102 from one molecule are ligands of the zinc ion, and His-107 and His-154 residues from additional molecules complete the site with tetrahedral coordination geometry. Part of a complex required for lens intermediate filament formation composed of BFSP1, BFSP2 and CRYAA. In terms of processing, acetylation at Lys-70 may increase chaperone activity. Post-translationally, undergoes age-dependent proteolytical cleavage at the C-terminus.

It is found in the cytoplasm. The protein resides in the nucleus. In terms of biological role, contributes to the transparency and refractive index of the lens. Acts as a chaperone, preventing aggregation of various proteins under a wide range of stress conditions. Required for the correct formation of lens intermediate filaments as part of a complex composed of BFSP1, BFSP2 and CRYAA. In Giraffa camelopardalis (Giraffe), this protein is Alpha-crystallin A chain (CRYAA).